The chain runs to 186 residues: Probable chorismate pyruvate-lyase (186 aa).

Residues Arg-77, Leu-115, and Glu-174 each coordinate substrate.

This sequence belongs to the UbiC family.

The protein resides in the cytoplasm. It catalyses the reaction chorismate = 4-hydroxybenzoate + pyruvate. The protein operates within cofactor biosynthesis; ubiquinone biosynthesis. Its function is as follows. Removes the pyruvyl group from chorismate, with concomitant aromatization of the ring, to provide 4-hydroxybenzoate (4HB) for the ubiquinone pathway. The protein is Probable chorismate pyruvate-lyase of Shewanella sp. (strain W3-18-1).